The following is a 693-amino-acid chain: MILTIILYTLLFSTCSAQSVHTMPEAVSRLNWGVMFNRGPTIMNGITKYRHTFEVKVPQLVYTPIVHMKCDTDYLKVLHCEAINDLIDSINGQVEPLITELKTRIATWMNPIPNVDTLTLPETQGRRGRRRREATLGPDYCKKINDPNYEGGGGGFLSSVGNFFSSLMGSPTWDDIKIIDKHICQLADVVDLNKEKIVQLGTEFATFSKAANNRMDALEDGMKNINTRVTETNLLLEKLSTEVTGALTQLENEIKMSMAGTNLLFRVQKQLYKFQEQINTMSATVEDFGNGINVLLSGRLAPQLVSVDSVKYVIDIISEKLTQQGGETRLVDQNPALYYLLNNVVFTKSEKLNSLYIMVSFPIYSIGGLMATYRLDKTYISIKEDVVSSTQIADLPDFLAVTPDGLYYSEFSTSEISSCTGDVIKSCKNERALQSFTQMTCAAALYKDDSTKILELCDIRYDQITVPSTAIKITDDTYMIHSSKVGTGHQWTISCPLIPNYVSTTMDACNACVVQVSCGCELIAPGEFYIPLQLTGCSKVLSSYIPHIEPKFPVNLPVLYAYFDDSVLNEINGDKLLNYKWKLDIPSIAPLEEEWSQSVERSQKYSSSLKKLLEETKANRKVYASKATAMLKKATDFTDLKLSKIKTLSDTFKDLSWLTKFGTGGGIAGVTIGLLLPILAIVFSCYVFCKRRV.

Residues 1 to 17 (MILTIILYTLLFSTCSA) form the signal peptide. Over 18–666 (QSVHTMPEAV…WLTKFGTGGG (649 aa)) the chain is Extracellular. A coiled-coil region spans residues 208 to 256 (SKAANNRMDALEDGMKNINTRVTETNLLLEKLSTEVTGALTQLENEIKM). Residues 667 to 687 (IAGVTIGLLLPILAIVFSCYV) traverse the membrane as a helical segment. Topologically, residues 688 to 693 (FCKRRV) are cytoplasmic.

It is found in the host membrane. The sequence is that of Putative transmembrane protein ORF68 from Magallana gigas (Pacific oyster).